The sequence spans 439 residues: Glutamyl-tRNA reductase (439 aa).

Substrate is bound by residues 46–49 (TCNR), Ser-111, 116–118 (EGE), and Gln-122. Catalysis depends on Cys-47, which acts as the Nucleophile. 191–196 (GTGAYA) is an NADP(+) binding site.

It belongs to the glutamyl-tRNA reductase family. Homodimer.

The enzyme catalyses (S)-4-amino-5-oxopentanoate + tRNA(Glu) + NADP(+) = L-glutamyl-tRNA(Glu) + NADPH + H(+). It functions in the pathway porphyrin-containing compound metabolism; protoporphyrin-IX biosynthesis; 5-aminolevulinate from L-glutamyl-tRNA(Glu): step 1/2. Its function is as follows. Catalyzes the NADPH-dependent reduction of glutamyl-tRNA(Glu) to glutamate 1-semialdehyde (GSA). The polypeptide is Glutamyl-tRNA reductase (Clavibacter michiganensis subsp. michiganensis (strain NCPPB 382)).